The following is a 678-amino-acid chain: DNA ligase (678 aa).

Residues 32–36, 81–82, and Glu-113 contribute to the NAD(+) site; these read DSEYD and SL. The N6-AMP-lysine intermediate role is filled by Lys-115. NAD(+) contacts are provided by Arg-136, Glu-174, Lys-291, and Lys-315. The Zn(2+) site is built by Cys-409, Cys-412, Cys-427, and Cys-433. A BRCT domain is found at 596–678; that stretch reads ASDNPFAGKT…MRLLGESSDA (83 aa).

Belongs to the NAD-dependent DNA ligase family. LigA subfamily. Requires Mg(2+) as cofactor. Mn(2+) serves as cofactor.

It carries out the reaction NAD(+) + (deoxyribonucleotide)n-3'-hydroxyl + 5'-phospho-(deoxyribonucleotide)m = (deoxyribonucleotide)n+m + AMP + beta-nicotinamide D-nucleotide.. Functionally, DNA ligase that catalyzes the formation of phosphodiester linkages between 5'-phosphoryl and 3'-hydroxyl groups in double-stranded DNA using NAD as a coenzyme and as the energy source for the reaction. It is essential for DNA replication and repair of damaged DNA. The sequence is that of DNA ligase from Sodalis glossinidius (strain morsitans).